Here is a 302-residue protein sequence, read N- to C-terminus: Sulfate adenylyltransferase subunit 2 (302 aa).

The segment at 280-302 (RQGRLIDSDQSASMEQKKRQGYF) is disordered.

Belongs to the PAPS reductase family. CysD subfamily. Heterodimer composed of CysD, the smaller subunit, and CysN.

It catalyses the reaction sulfate + ATP + H(+) = adenosine 5'-phosphosulfate + diphosphate. It functions in the pathway sulfur metabolism; hydrogen sulfide biosynthesis; sulfite from sulfate: step 1/3. Functionally, with CysN forms the ATP sulfurylase (ATPS) that catalyzes the adenylation of sulfate producing adenosine 5'-phosphosulfate (APS) and diphosphate, the first enzymatic step in sulfur assimilation pathway. APS synthesis involves the formation of a high-energy phosphoric-sulfuric acid anhydride bond driven by GTP hydrolysis by CysN coupled to ATP hydrolysis by CysD. The polypeptide is Sulfate adenylyltransferase subunit 2 (Shewanella baltica (strain OS195)).